Consider the following 631-residue polypeptide: Chaperone protein HtpG (631 aa).

Positions methionine 1–arginine 338 are a; substrate-binding. The b stretch occupies residues glutamate 339–lysine 554. The interval leucine 555–asparagine 631 is c.

The protein belongs to the heat shock protein 90 family. Homodimer.

Its subcellular location is the cytoplasm. Molecular chaperone. Has ATPase activity. The sequence is that of Chaperone protein HtpG from Baumannia cicadellinicola subsp. Homalodisca coagulata.